We begin with the raw amino-acid sequence, 248 residues long: ATP synthase subunit a (248 aa).

The next 6 membrane-spanning stretches (helical) occupy residues 34-54 (TNVTLWMALAVAAIALLLVAG), 91-111 (YFPYIFTLFMFILVANFLGLI), 121-141 (IAVTAVLALAVFITVTVIGFV), 147-167 (FLSLFWVASAPLALRPILAVI), 197-217 (FAGFAQVAAVAPIAIIGVMAI), and 220-240 (LEVLVSAIQAYVFTILTCVYL).

It belongs to the ATPase A chain family. F-type ATPases have 2 components, CF(1) - the catalytic core - and CF(0) - the membrane proton channel. CF(1) has five subunits: alpha(3), beta(3), gamma(1), delta(1), epsilon(1). CF(0) has four main subunits: a, b, b' and c.

Its subcellular location is the cell inner membrane. Functionally, key component of the proton channel; it plays a direct role in the translocation of protons across the membrane. In Dinoroseobacter shibae (strain DSM 16493 / NCIMB 14021 / DFL 12), this protein is ATP synthase subunit a.